The chain runs to 617 residues: NADPH-dependent diflavin oxidoreductase 1 (617 aa).

A Flavodoxin-like domain is found at 3–147 (PMILYASETG…AFLPWLQQTL (145 aa)). Residues 9 to 14 (SETGNA), 56 to 59 (STHG), 94 to 103 (LGDSSYERFC), and Glu-129 contribute to the FMN site. One can recognise an FAD-binding FR-type domain in the interval 226–465 (DDWVWATLKK…HIASPTLFLP (240 aa)). FAD-binding positions include 404–407 (RQFS) and 438–441 (GLCS). Residues Thr-479, 534–535 (SR), and 540–544 (RIYVQ) each bind NADP(+). Trp-617 serves as a coordination point for FAD.

This sequence belongs to the NADPH-dependent diflavin oxidoreductase NDOR1 family. It in the N-terminal section; belongs to the flavodoxin family. In the C-terminal section; belongs to the flavoprotein pyridine nucleotide cytochrome reductase family. Interacts with DRE2; as part of the cytosolic iron-sulfur (Fe-S) protein assembly (CIA) machinery. FAD is required as a cofactor. FMN serves as cofactor.

The protein localises to the cytoplasm. Its subcellular location is the mitochondrion. It carries out the reaction 2 oxidized [2Fe-2S]-[protein] + NADPH = 2 reduced [2Fe-2S]-[protein] + NADP(+) + H(+). Functionally, NADPH-dependent reductase which is a central component of the cytosolic iron-sulfur (Fe-S) protein assembly (CIA) machinery. Transfers electrons from NADPH via its FAD and FMN prosthetic groups to the [2Fe-2S] cluster of DRE2, another key component of the CIA machinery. In turn, this reduced cluster provides electrons for assembly of cytosolic iron-sulfur cluster proteins. Positively controls H(2)O(2)-induced cell death. This is NADPH-dependent diflavin oxidoreductase 1 from Cryptococcus neoformans var. neoformans serotype D (strain B-3501A) (Filobasidiella neoformans).